Here is a 1066-residue protein sequence, read N- to C-terminus: Cytoplasmic dynein 2 intermediate chain 1 (1066 aa).

Disordered regions lie at residues 22–366 (LWAI…ENAR) and 381–408 (YEDD…LEEL). Ser-30 is modified (phosphoserine). Basic and acidic residues-rich tracts occupy residues 30–135 (SKEE…EELR), 147–171 (ETRD…RSEE), 180–256 (DEDR…EERH), 264–308 (GFHF…KRDG), and 316–336 (NLVR…HEEG). The residue at position 247 (Ser-247) is a Phosphoserine. 2 stretches are compositionally biased toward acidic residues: residues 351-362 (ETVEIEKEETDL) and 381-397 (YEDD…ESSN). Positions 399-408 (PESREKLEEL) are enriched in basic and acidic residues. The tract at residues 473-552 (ASHRQKSRTQ…DIQTEEIETR (80 aa)) is binding to the DYNLT2B-DYNLT1/DYNLT3 dimer. WD repeat units lie at residues 694–734 (ICES…RLHY), 775–821 (VHKK…KADI), 907–947 (IRPV…PLLQ), and 952–992 (TDSH…LGPV).

The protein belongs to the dynein light intermediate chain family. In terms of assembly, intermediate chain of the cytoplasmic dynein complex 2, a multisubunit complex, composed at least of eleven different proteins. The cytoplasmic dynein 2 complex consists of two catalytic heavy chains (HCs) and a number of non-catalytic subunits presented by intermediate chains (ICs), light intermediate chains (LICs) and light chains (LCs). Among them, a heavy chain (DYNC2H1), two intermediate chains (DYNC2I2 and DYNC2I1), a light intermediate chain (DYNC2LI1), and a light chain (DYNLT2B) are unique to the cytoplasmic dynein complex 2, but a subset of the light chains are also shared by dynein-1 and dynein-2 complexes. Interacts with DYNC2I2; their C-terminal domains each bind a copy of the heavy chain, and their extended N-terminal regions are held together by an array of light chain dimers. Interacts with DYNLT2B. Interacts (via the N-terminal half) with DYNLT2B-DYNLT1 dimer or with DYNLT2B-DYNLT3 dimer; this interaction is crucial for retrograde trafficking of ciliary proteins. In terms of tissue distribution, expressed in chondrocytes (at protein level).

The protein resides in the cell projection. Its subcellular location is the cilium. It localises to the cytoplasm. It is found in the cytoskeleton. The protein localises to the microtubule organizing center. The protein resides in the centrosome. Functionally, acts as one of several non-catalytic accessory components of the cytoplasmic dynein 2 complex (dynein-2 complex), a motor protein complex that drives the movement of cargos along microtubules within cilia and flagella in concert with the intraflagellar transport (IFT) system. DYNC2I1 plays a major role in retrograde ciliary protein trafficking in cilia and flagella. Also requires to maintain a functional transition zone. This Homo sapiens (Human) protein is Cytoplasmic dynein 2 intermediate chain 1.